The chain runs to 202 residues: Protein cuti-1 (202 aa).

The Cytoplasmic portion of the chain corresponds to 1–37 (MPNDRVAPLPPNFVYSPHDKFYYAPATCNSMHYTTAS). A helical membrane pass occupies residues 38-58 (YISAFIEFLVMGTGAICFYVM). At 59 to 68 (SHKSDSIGKW) the chain is on the extracellular side. The helical transmembrane segment at 69–89 (LFYIQAGITVLSLLTSALMAF) threads the bilayer. Over 90–107 (GLWKENPQMLGSKLKFIE) the chain is Cytoplasmic. Residues 108 to 128 (FIICFLLIWAVISIVCMAFGI) traverse the membrane as a helical segment. Topologically, residues 129–148 (QFTRQVFGIFGKVHRIEQDY) are extracellular. Residues 149-169 (GPIWPFNIAVVSFFTAAIAIW) form a helical membrane-spanning segment. At 170–202 (TRIIIQGAADYLYDKAYFADKQNVELRESSKTR) the chain is on the cytoplasmic side.

In terms of assembly, interacts with vps-39.

It localises to the cell membrane. The protein resides in the cytoplasm. In terms of biological role, involved in cuticle formation and ensures cuticle shedding during larval development. Plays a role in maintaining the hypodermis. In association with vps-39, may play a role in vesicle tethering. In Caenorhabditis elegans, this protein is Protein cuti-1.